The sequence spans 424 residues: Serine--tRNA ligase (424 aa).

An L-serine-binding site is contributed by 230-232 (TAE). Position 261–263 (261–263 (RAE)) interacts with ATP. Glu284 lines the L-serine pocket. An ATP-binding site is contributed by 348–351 (EISS). Residue Ser384 coordinates L-serine.

It belongs to the class-II aminoacyl-tRNA synthetase family. Type-1 seryl-tRNA synthetase subfamily. In terms of assembly, homodimer. The tRNA molecule binds across the dimer.

The protein resides in the cytoplasm. The enzyme catalyses tRNA(Ser) + L-serine + ATP = L-seryl-tRNA(Ser) + AMP + diphosphate + H(+). The catalysed reaction is tRNA(Sec) + L-serine + ATP = L-seryl-tRNA(Sec) + AMP + diphosphate + H(+). It participates in aminoacyl-tRNA biosynthesis; selenocysteinyl-tRNA(Sec) biosynthesis; L-seryl-tRNA(Sec) from L-serine and tRNA(Sec): step 1/1. Catalyzes the attachment of serine to tRNA(Ser). Is also able to aminoacylate tRNA(Sec) with serine, to form the misacylated tRNA L-seryl-tRNA(Sec), which will be further converted into selenocysteinyl-tRNA(Sec). This chain is Serine--tRNA ligase, found in Carboxydothermus hydrogenoformans (strain ATCC BAA-161 / DSM 6008 / Z-2901).